The chain runs to 221 residues: MEDSYLHKGLRRKLIKILRDKGIQDELVLQAIDRVPRHIFLDNAFLEHAYQDKAFPIGDGQTISQPYTVASQTSLLKLSPGMKVLEIGTGSGYQCSVLLEMGVNVFTIEYHKSLFEKSKKMLQSLGYKAQFFCGDGSEGLARFGPYDRILATAGAPYVPQKLLEQLKVGGILVIPVGDQKTQKMLRLTKVTEKEITQEECGDFRFVPLVGKDGWNAKTNKL.

Residue S64 is part of the active site.

Belongs to the methyltransferase superfamily. L-isoaspartyl/D-aspartyl protein methyltransferase family.

It is found in the cytoplasm. The enzyme catalyses [protein]-L-isoaspartate + S-adenosyl-L-methionine = [protein]-L-isoaspartate alpha-methyl ester + S-adenosyl-L-homocysteine. Its function is as follows. Catalyzes the methyl esterification of L-isoaspartyl residues in peptides and proteins that result from spontaneous decomposition of normal L-aspartyl and L-asparaginyl residues. It plays a role in the repair and/or degradation of damaged proteins. The sequence is that of Protein-L-isoaspartate O-methyltransferase from Cytophaga hutchinsonii (strain ATCC 33406 / DSM 1761 / CIP 103989 / NBRC 15051 / NCIMB 9469 / D465).